A 617-amino-acid polypeptide reads, in one-letter code: tRNA uridine 5-carboxymethylaminomethyl modification enzyme MnmG (617 aa).

Residues 9-14 (GAGHAG), Val-120, and Thr-175 each bind FAD. 267-281 (GPRYCPSIEDKVVRF) contacts NAD(+). Gln-364 is a binding site for FAD.

Belongs to the MnmG family. As to quaternary structure, homodimer. Heterotetramer of two MnmE and two MnmG subunits. FAD is required as a cofactor.

The protein resides in the cytoplasm. Functionally, NAD-binding protein involved in the addition of a carboxymethylaminomethyl (cmnm) group at the wobble position (U34) of certain tRNAs, forming tRNA-cmnm(5)s(2)U34. This is tRNA uridine 5-carboxymethylaminomethyl modification enzyme MnmG from Onion yellows phytoplasma (strain OY-M).